A 245-amino-acid polypeptide reads, in one-letter code: 5'-nucleotidase SurE (245 aa).

A divalent metal cation-binding residues include Asp-8, Asp-9, Ser-39, and Asn-97.

The protein belongs to the SurE nucleotidase family. The cofactor is a divalent metal cation.

It localises to the cytoplasm. The enzyme catalyses a ribonucleoside 5'-phosphate + H2O = a ribonucleoside + phosphate. In terms of biological role, nucleotidase that shows phosphatase activity on nucleoside 5'-monophosphates. The sequence is that of 5'-nucleotidase SurE from Clostridium kluyveri (strain NBRC 12016).